We begin with the raw amino-acid sequence, 331 residues long: POU domain, class 4, transcription factor 3 (331 aa).

Positions Thr-81–Pro-97 are enriched in low complexity. The disordered stretch occupies residues Thr-81–Thr-108. The region spanning Asp-172 to Glu-249 is the POU-specific domain. A DNA-binding region (homeobox) is located at residues Arg-267–Lys-326.

Belongs to the POU transcription factor family. Class-4 subfamily. As to quaternary structure, interaction with ISL1. As to expression, expressed in the nervous system. Expressed in the otic vesicle during embryogenesis. Expressed in the adult retina in a subset of retinal ganglion cells (RGCs), and at a lower level in the adult tectum. Not expressed in the adult olfactory bulb.

Its subcellular location is the nucleus. It is found in the cytoplasm. Functionally, acts as a transcriptional activator. Acts by binding to sequences related to the consensus octamer motif 5'-ATGCAAAT-3' in the regulatory regions of its target genes. May play a role in specifying terminally differentiated neuronal phenotypes. This chain is POU domain, class 4, transcription factor 3 (pou4f3), found in Danio rerio (Zebrafish).